The sequence spans 348 residues: Phenylalanine--tRNA ligase alpha subunit (348 aa).

Glu259 is a Mg(2+) binding site.

The protein belongs to the class-II aminoacyl-tRNA synthetase family. Phe-tRNA synthetase alpha subunit type 1 subfamily. In terms of assembly, tetramer of two alpha and two beta subunits. Requires Mg(2+) as cofactor.

It is found in the cytoplasm. The catalysed reaction is tRNA(Phe) + L-phenylalanine + ATP = L-phenylalanyl-tRNA(Phe) + AMP + diphosphate + H(+). The protein is Phenylalanine--tRNA ligase alpha subunit of Latilactobacillus sakei subsp. sakei (strain 23K) (Lactobacillus sakei subsp. sakei).